The sequence spans 302 residues: Methionyl-tRNA formyltransferase (302 aa).

Ser108–Pro111 is a (6S)-5,6,7,8-tetrahydrofolate binding site.

The protein belongs to the Fmt family.

The catalysed reaction is L-methionyl-tRNA(fMet) + (6R)-10-formyltetrahydrofolate = N-formyl-L-methionyl-tRNA(fMet) + (6S)-5,6,7,8-tetrahydrofolate + H(+). In terms of biological role, attaches a formyl group to the free amino group of methionyl-tRNA(fMet). The formyl group appears to play a dual role in the initiator identity of N-formylmethionyl-tRNA by promoting its recognition by IF2 and preventing the misappropriation of this tRNA by the elongation apparatus. This Cereibacter sphaeroides (strain ATCC 17025 / ATH 2.4.3) (Rhodobacter sphaeroides) protein is Methionyl-tRNA formyltransferase.